A 139-amino-acid chain; its full sequence is Large ribosomal subunit protein uL13 (139 aa).

It belongs to the universal ribosomal protein uL13 family. As to quaternary structure, part of the 50S ribosomal subunit.

Functionally, this protein is one of the early assembly proteins of the 50S ribosomal subunit, although it is not seen to bind rRNA by itself. It is important during the early stages of 50S assembly. The protein is Large ribosomal subunit protein uL13 of Methanococcoides burtonii (strain DSM 6242 / NBRC 107633 / OCM 468 / ACE-M).